We begin with the raw amino-acid sequence, 129 residues long: L-ectoine synthase (129 aa).

It belongs to the ectoine synthase family.

It catalyses the reaction (2S)-4-acetamido-2-aminobutanoate = L-ectoine + H2O. It functions in the pathway amine and polyamine biosynthesis; ectoine biosynthesis; L-ectoine from L-aspartate 4-semialdehyde: step 3/3. Its function is as follows. Catalyzes the circularization of gamma-N-acetyl-alpha,gamma-diaminobutyric acid (ADABA) to ectoine (1,4,5,6-tetrahydro-2-methyl-4-pyrimidine carboxylic acid), which is an excellent osmoprotectant. This chain is L-ectoine synthase, found in Halalkalibacterium halodurans (strain ATCC BAA-125 / DSM 18197 / FERM 7344 / JCM 9153 / C-125) (Bacillus halodurans).